Reading from the N-terminus, the 129-residue chain is MKTHRPARVGELIKREVSDMLLRGQIKDPRVGAGLVSVTDVEVTGDLRQAKIFVSIFGTPEAQKLTMMALAEVTGFVRQEIGHRIRLRYTPEIAFVQDRSLERGARITRLIDEIRAEEEARAAHKEEGN.

Belongs to the RbfA family. In terms of assembly, monomer. Binds 30S ribosomal subunits, but not 50S ribosomal subunits or 70S ribosomes.

Its subcellular location is the cytoplasm. Its function is as follows. One of several proteins that assist in the late maturation steps of the functional core of the 30S ribosomal subunit. Associates with free 30S ribosomal subunits (but not with 30S subunits that are part of 70S ribosomes or polysomes). Required for efficient processing of 16S rRNA. May interact with the 5'-terminal helix region of 16S rRNA. This Gloeobacter violaceus (strain ATCC 29082 / PCC 7421) protein is Ribosome-binding factor A.